The chain runs to 82 residues: Small ribosomal subunit protein bS16 (82 aa).

The protein belongs to the bacterial ribosomal protein bS16 family.

The polypeptide is Small ribosomal subunit protein bS16 (Saccharophagus degradans (strain 2-40 / ATCC 43961 / DSM 17024)).